The primary structure comprises 304 residues: Aspartate carbamoyltransferase catalytic subunit (304 aa).

Positions 57 and 58 each coordinate carbamoyl phosphate. L-aspartate is bound at residue K85. Residues R107, H134, and Q137 each contribute to the carbamoyl phosphate site. R167 and R216 together coordinate L-aspartate. Residues A260 and P261 each coordinate carbamoyl phosphate.

This sequence belongs to the aspartate/ornithine carbamoyltransferase superfamily. ATCase family. Heterododecamer (2C3:3R2) of six catalytic PyrB chains organized as two trimers (C3), and six regulatory PyrI chains organized as three dimers (R2).

It catalyses the reaction carbamoyl phosphate + L-aspartate = N-carbamoyl-L-aspartate + phosphate + H(+). The protein operates within pyrimidine metabolism; UMP biosynthesis via de novo pathway; (S)-dihydroorotate from bicarbonate: step 2/3. Functionally, catalyzes the condensation of carbamoyl phosphate and aspartate to form carbamoyl aspartate and inorganic phosphate, the committed step in the de novo pyrimidine nucleotide biosynthesis pathway. The polypeptide is Aspartate carbamoyltransferase catalytic subunit (Fusobacterium nucleatum subsp. nucleatum (strain ATCC 25586 / DSM 15643 / BCRC 10681 / CIP 101130 / JCM 8532 / KCTC 2640 / LMG 13131 / VPI 4355)).